The following is a 1040-amino-acid chain: Multidrug resistance protein MdtB (1040 aa).

12 helical membrane passes run 16 to 36 (FIMRPVATTLLMVAILLAGII), 347 to 367 (LMMAIALVVMIIYLFLRNIPA), 369 to 389 (IIPGVAVPLSLIGTFAVMVFL), 396 to 416 (LTLMALTIATGFVVDDAIVVI), 440 to 460 (IGFTIISLIFSLIAVLIPLLF), 472 to 492 (FAITLAVAILISAVVSLTLTP), 537 to 557 (WLTLSVALSTLLLSVLLWVFI), 863 to 883 (LGSTVWLIVAAVVAMYIVLGI), 888 to 908 (FIHPITILSTLPTAGVGALLA), 911 to 931 (IAGSELDVIAIIGIILLIGIV), 968 to 988 (ILMTTLAALLGALPLMLSTGV), and 998 to 1018 (IGMVGGLIVSQVLTLFTTPVI).

It belongs to the resistance-nodulation-cell division (RND) (TC 2.A.6) family. MdtB subfamily. Part of a tripartite efflux system composed of MdtA, MdtB and MdtC. MdtB forms a heteromultimer with MdtC.

It localises to the cell inner membrane. In Shigella boydii serotype 4 (strain Sb227), this protein is Multidrug resistance protein MdtB.